A 29-amino-acid chain; its full sequence is MLYPLSYMLLWTDSIVEQYKKFYLFRFDL.

It localises to the plastid. Its subcellular location is the chloroplast. This is an uncharacterized protein from Trieres chinensis (Marine centric diatom).